Consider the following 365-residue polypeptide: tRNA/tmRNA (uracil-C(5))-methyltransferase (365 aa).

S-adenosyl-L-methionine contacts are provided by Gln-189, Tyr-217, Asn-222, Glu-238, and Asp-298. The active-site Nucleophile is Cys-323. Glu-357 serves as the catalytic Proton acceptor.

It belongs to the class I-like SAM-binding methyltransferase superfamily. RNA M5U methyltransferase family. TrmA subfamily.

The enzyme catalyses uridine(54) in tRNA + S-adenosyl-L-methionine = 5-methyluridine(54) in tRNA + S-adenosyl-L-homocysteine + H(+). The catalysed reaction is uridine(341) in tmRNA + S-adenosyl-L-methionine = 5-methyluridine(341) in tmRNA + S-adenosyl-L-homocysteine + H(+). In terms of biological role, dual-specificity methyltransferase that catalyzes the formation of 5-methyluridine at position 54 (m5U54) in all tRNAs, and that of position 341 (m5U341) in tmRNA (transfer-mRNA). This chain is tRNA/tmRNA (uracil-C(5))-methyltransferase, found in Shewanella sp. (strain MR-4).